A 252-amino-acid chain; its full sequence is MRKKIVVGNWKMNKTIAEAVELSSAIIDQLGEVSASCEVGIAPAFPALSGVHGVISGTGIHLAAQNCHYEDDGAFTGEVSVRMLDEAGCSYVIVGHSERRQYFGDTNPVVNLKVKKALSAGLNVILCVGETLDEREKGITTEVVTCQVKEGLEGVADIGDIVIAYEPVWAIGTGKTASSLQAQEVHASIRATVAGLYSEPAAAGVRIQYGGSVKPSNAEELFAMPDIDGGLIGGASLNAEDFVAIVKAAEKS.

Position 9–11 (9–11 (NWK)) interacts with substrate. His96 (electrophile) is an active-site residue. Glu166 acts as the Proton acceptor in catalysis. Substrate-binding positions include Gly172, Ser212, and 233-234 (GG).

This sequence belongs to the triosephosphate isomerase family. Homodimer.

The protein resides in the cytoplasm. It catalyses the reaction D-glyceraldehyde 3-phosphate = dihydroxyacetone phosphate. Its pathway is carbohydrate biosynthesis; gluconeogenesis. It functions in the pathway carbohydrate degradation; glycolysis; D-glyceraldehyde 3-phosphate from glycerone phosphate: step 1/1. Involved in the gluconeogenesis. Catalyzes stereospecifically the conversion of dihydroxyacetone phosphate (DHAP) to D-glyceraldehyde-3-phosphate (G3P). This Prosthecochloris aestuarii (strain DSM 271 / SK 413) protein is Triosephosphate isomerase.